Reading from the N-terminus, the 702-residue chain is Polyribonucleotide nucleotidyltransferase (702 aa).

2 residues coordinate Mg(2+): Asp-485 and Asp-491. In terms of domain architecture, KH spans Pro-552–Ile-612. The S1 motif domain occupies Gly-622–Lys-690.

It belongs to the polyribonucleotide nucleotidyltransferase family. Requires Mg(2+) as cofactor.

The protein resides in the cytoplasm. The catalysed reaction is RNA(n+1) + phosphate = RNA(n) + a ribonucleoside 5'-diphosphate. Involved in mRNA degradation. Catalyzes the phosphorolysis of single-stranded polyribonucleotides processively in the 3'- to 5'-direction. The sequence is that of Polyribonucleotide nucleotidyltransferase from Clostridium botulinum (strain Kyoto / Type A2).